Reading from the N-terminus, the 1079-residue chain is MLGDRNEGMATIPALNQIQFEGFCRFLDQGLIEELSQFPKGNSFLEYFRDEEIDFQLFSKTYHLVKPLIKERDARYESLTYSSKLYVSAGFLWKDKRPQKKTICIGNLPLMNSVGTFIVNGISRVVINQILQSPGIYYGSELDYQGFTVYIATIISDWGGRLKLEIDKKERIWARVSRKQKISILVLSSAMGSNLKEILENACYPEIFLALNLKKECGFKEKKYAILELYAKYKDFTEYKDSLDFDFLCETLRKTFFSHKCELGRVGRQNINRRLNLDISHKNTFLLPQDILAATNHLIGMKFGMGTLDDMNHLKNKRIRSVADLLQDQFGLALNRLEDAVCDTIGRAIAKDKIPTLRHLATSTPLTTTYESFFKLHPLSHVFDETNPLTHIVHGRKWSFLGPGGLTERTARFRVRDIHPSNYGRICPIDTSEGIKVGLIGYLATHARIGDCGSLESPFYEMSEKSKRVRMLSLSSRKEEYYMIGTGNSLALNQGIQEEQIIPARYRQEFLTIAWEEVHFRSVFPFQYFSIGVSLIPFLEHNDATRALMSSNMQRQAVPLSRSEKCIVGTGFEGQVALDSGIPLITEHAGKIISTHTDKILLSVNGETLSSPLVLFQRSNKNTWIHQTPQVSRGNCTKKGQILADGAATVGGELALGKNVLVGYMPWEGYNFEDAVLISERLVYEDIYTSFHIRKCEIKIFMTMKGPEKITNQIPHIDPHLLRNLDKNGVVILGSWVEAGDILVGKLTPELVELSPEKRLIEALFDAPIGTTRQSCLKLPIWGRGRVIDVRWIHKGSASRSNPERIRVYILQKRKIKVGDKVAGRHGNKGIVSKILPIQDMPYLQDGRPLDMVFNPLGVPSRMNVGQIFECSLGLAGGLLDRHYRIAPFDERYEEEASRKLVFSELYEASKQTGNPWVFEPEYPGKSIIFDGRTGDPFEQPVIVGQSYILKLIHQVDDKIHGRSTGPYSRVTQQPVKGRARRGGQRVGEMEVWALQGLGVAHILEEILTYKSDHLTTRNQIFGTLLLGGALPKPEPEDRPESFRLLVRELRSLSLELNYFLVSKNKKNFNFWKMNRVEV.

Residues 963 to 982 (RSTGPYSRVTQQPVKGRARR) are disordered. Residues 966-975 (GPYSRVTQQP) are compositionally biased toward polar residues.

The protein belongs to the RNA polymerase beta chain family. In plastids the minimal PEP RNA polymerase catalytic core is composed of four subunits: alpha, beta, beta', and beta''. When a (nuclear-encoded) sigma factor is associated with the core the holoenzyme is formed, which can initiate transcription.

It is found in the plastid. The protein resides in the chloroplast. It catalyses the reaction RNA(n) + a ribonucleoside 5'-triphosphate = RNA(n+1) + diphosphate. In terms of biological role, DNA-dependent RNA polymerase catalyzes the transcription of DNA into RNA using the four ribonucleoside triphosphates as substrates. The polypeptide is DNA-directed RNA polymerase subunit beta (Pelargonium hortorum (Common geranium)).